The following is a 698-amino-acid chain: MKNKGIDQFRVIAAMMVVAIHCLPLHYLWPEGDILITLTIFRVAVPFFFMISGYYVFAELAVANSYPSRQRVFNFIKKQLKVYLLATLMFLPLALYSQTIGFDLPVGTLVQVLLVNGILYHLWYFPALITGSLLLTSLLIHVSFKKVFWLAAGLYLIGLGGDSWFGLIQQTPIEPFYTAVFHLLDGTRNGIFFTPLFLCLGVLVRKQSEKRSLSKTALFFLISLIGLLIESAYLHGFSIPKHDSMYLFLPVVLFFLFPLILRWHPHRTWKHPGQLSLWLYLLHPYTIAGTHFLSQKISILQNNLINYLVVLILTIGFICLFLRQKHSWFRHKQTTPVKRAVKEFSKTALLHNLQEIQRIISPKTKVMAVVKADAYGCGAKEVAPVLEQAGIDFFAVATIDEGIRLRKNAVKSPILVLGYTSPKRIKELRRYSLTQSIISEGHAVALSQRKVAIDCHLAIDTGMHRLGVTPTIDSILSIFDLPFLTISGVYSHLGSADRLNPDSMIRTQKQIACFDQILLELDQRQISYGITHLQSSYGILNYPDLNYDYVRPGILLTGSLSDTNEPTKQRVSLQPILTLKAQLITKRVVAKGEAIGYGQTAVANQETTVGVVSIGYCDGLPRSLSNQEFCLSYRGQSLPQIGLICMDMLLIDLSHCPTIPIESEIEILTDWSDTAEQVQTITNELICRIGPRVSARIK.

Topologically, residues 1 to 10 (MKNKGIDQFR) are cytoplasmic. The chain crosses the membrane as a helical span at residues 11-31 (VIAAMMVVAIHCLPLHYLWPE). The Extracellular segment spans residues 32–42 (GDILITLTIFR). A helical transmembrane segment spans residues 43–63 (VAVPFFFMISGYYVFAELAVA). Over 64-81 (NSYPSRQRVFNFIKKQLK) the chain is Cytoplasmic. The helical transmembrane segment at 82–102 (VYLLATLMFLPLALYSQTIGF) threads the bilayer. At 103–121 (DLPVGTLVQVLLVNGILYH) the chain is on the extracellular side. Residues 122–142 (LWYFPALITGSLLLTSLLIHV) traverse the membrane as a helical segment. Residues 143 to 147 (SFKKV) lie on the Cytoplasmic side of the membrane. The helical transmembrane segment at 148–168 (FWLAAGLYLIGLGGDSWFGLI) threads the bilayer. Residues 169-183 (QQTPIEPFYTAVFHL) are Extracellular-facing. A helical membrane pass occupies residues 184-204 (LDGTRNGIFFTPLFLCLGVLV). The Cytoplasmic segment spans residues 205-216 (RKQSEKRSLSKT). The chain crosses the membrane as a helical span at residues 217-237 (ALFFLISLIGLLIESAYLHGF). The Extracellular portion of the chain corresponds to 238 to 244 (SIPKHDS). The helical transmembrane segment at 245-265 (MYLFLPVVLFFLFPLILRWHP) threads the bilayer. Residues 266–274 (HRTWKHPGQ) are Cytoplasmic-facing. Residues 275–295 (LSLWLYLLHPYTIAGTHFLSQ) form a helical membrane-spanning segment. The Extracellular segment spans residues 296–301 (KISILQ). A helical transmembrane segment spans residues 302-322 (NNLINYLVVLILTIGFICLFL). The Cytoplasmic segment spans residues 323 to 698 (RQKHSWFRHK…IGPRVSARIK (376 aa)). Residues 332–698 (KQTTPVKRAV…IGPRVSARIK (367 aa)) form a racemase region. The active-site Proton acceptor is Lys-371. Position 371 is an N6-(pyridoxal phosphate)lysine (Lys-371). Residue Arg-465 coordinates substrate. Tyr-597 functions as the Proton acceptor in the catalytic mechanism. A substrate-binding site is contributed by Met-646.

It in the N-terminal section; belongs to the acyltransferase 3 family. This sequence in the C-terminal section; belongs to the alanine racemase family. Homodimer. Requires pyridoxal 5'-phosphate as cofactor.

It is found in the cell membrane. It catalyses the reaction L-alanine = D-alanine. It carries out the reaction L-serine = D-serine. The protein operates within amino-acid biosynthesis; D-alanine biosynthesis; D-alanine from L-alanine: step 1/1. In terms of biological role, catalyzes the interconversion of L-serine and D-serine, and L-alanine and D-alanine. L-alanine is racemized at a rate that is 14% of that of L-serine. Together with VanC/VanC1 and VanXYC, required for vancomycin resistance in E.gallinarum strain BM4174. This chain is Serine/alanine racemase, found in Enterococcus gallinarum.